A 323-amino-acid chain; its full sequence is MGNLLKVLTREIENYPHFFLDFENAQPTEGEREIWNQISAVLQDSESILADLQAYKGAGPEIRDAIQNPNDIQLQEKAWNAVCPLVVRLKRFYEFSIRLEKALQSLLESLTCPPYTPTQHLEREQALAKEFAEILHFTLRFDELKMRNPAIQNDFSYYRRTISRNRINNMHLDIENEVNNEMANRMSLFYAEATPMLKTLSNATMHFVSENKTLPIENTTDCLSTMTSVCKVMLETPEYRSRFTSEETLMFCMRVMVGVIILYDHVHPVGAFCKTSKIDMKGCIKVLKEQAPDSVEGLLNALRFTTKHLNDESTSKQIRAMLQ.

The protein belongs to the CYRI family. Interacts with RAC1 (GTP-bound form preferentially).

The protein localises to the membrane. May negatively regulate RAC1 signaling and RAC1-driven cytoskeletal remodeling. May regulate chemotaxis, cell migration and epithelial polarization by controlling the polarity, plasticity, duration and extent of protrusions. This is CYFIP-related Rac1 interactor A (CYRIA) from Bos taurus (Bovine).